The following is a 1346-amino-acid chain: Pikromycin polyketide synthase component PikAIV (1346 aa).

The stretch at 3–32 forms a coiled coil; it reads SSNEQLVDALRASLKENEELRKESRRRADR. In terms of domain architecture, Ketosynthase family 3 (KS3) spans 34 to 461; that stretch reads QEPMAIVGMS…GTNAHVVLEE (428 aa). Positions 37–1332 are module 6; sequence MAIVGMSCRF…HAPAVAEAVL (1296 aa). Residues Cys207, His342, and His382 each act as for beta-ketoacyl synthase activity in the active site. Positions 562-844 are acyltransferase; sequence FVFPGQGTQW…VLTMTLPDKV (283 aa). The active-site Acyl-ester intermediate; for acyltransferase activity is the Ser652. Residues 945–1020 enclose the Carrier domain; sequence SAVLAMVMRQ…ALAERISDEL (76 aa). Ser980 bears the O-(pantetheine 4'-phosphoryl)serine mark. Residues 1028-1050 form a disordered region; it reads AEPSDHEQAEEEKAAAPAGARSG. Residues 1030-1041 are compositionally biased toward basic and acidic residues; the sequence is PSDHEQAEEEKA. Thr1125 serves as a coordination point for substrate. The interval 1127 to 1332 is thioesterase; the sequence is ANGGPHEFLR…HAPAVAEAVL (206 aa). The active-site Nucleophile; for thioesterase activity is Ser1196. 2 residues coordinate substrate: Gly1197 and Asp1224. The active-site Proton acceptor; for thioesterase activity is the His1316.

In terms of assembly, homodimer. Pikromycin PKS consists of a combination of multimodular (PikAI and PikAII) and monomodular (PikAIII and PikAIV) polypeptides each coding for a functional synthase subunit which participates in 1 (monomodular) or 2 (multimodular) of the six FAS-like elongation steps required for formation of the polyketide. Module 1, 2, 3, 4, 5, and 6 participating in biosynthesis steps 1, 2, 3, 4, 5, and 6, respectively. It depends on pantetheine 4'-phosphate as a cofactor.

The catalysed reaction is 5 (S)-methylmalonyl-CoA + malonyl-CoA + 5 NADPH + 11 H(+) = 10-deoxymethynolide + 6 CO2 + 5 NADP(+) + 6 CoA + 2 H2O. It catalyses the reaction 6 (S)-methylmalonyl-CoA + malonyl-CoA + 5 NADPH + 12 H(+) = narbonolide + 7 CO2 + 5 NADP(+) + 7 CoA + 2 H2O. It functions in the pathway antibiotic biosynthesis. Irreversibly inhibited by (2S,3R,4S)-2,4-dihydroxy-3-methylhexyl-phosphonic acid and (3R,4S)-4-hydroxy-3-methyl-2-oxohexyl-phosphonic acid. Involved in the biosynthesis of 12- and 14-membered ring macrolactone antibiotics such as methymycin and neomethymycin, and pikromycin and narbomycin, respectively. Component of the pikromycin PKS which catalyzes the biosynthesis of both precursors 10-deoxymethynolide (12-membered ring macrolactone) and narbonolide (14-membered ring macrolactone). Chain elongation through PikAI, PikAII and PikAIII followed by thioesterase catalyzed termination results in the production of 10-deoxymethynolide, while continued elongation through PikAIV, followed by thioesterase (TE) catalyzed cyclization results in the biosynthesis of the narbonolide. The thioesterase can use a series of diketide-N-acetylcysteamine (SNAC) thioesters, but has a strong preference for the 2-methyl-3-ketopentanoyl-SNAC over the stereoisomers of 2-methyl-3-hydroxyacyl-SNAC. The protein is Pikromycin polyketide synthase component PikAIV of Streptomyces venezuelae.